Here is a 163-residue protein sequence, read N- to C-terminus: Protein-export protein SecB (163 aa).

The protein belongs to the SecB family. Homotetramer, a dimer of dimers. One homotetramer interacts with 1 SecA dimer.

Its subcellular location is the cytoplasm. Its function is as follows. One of the proteins required for the normal export of preproteins out of the cell cytoplasm. It is a molecular chaperone that binds to a subset of precursor proteins, maintaining them in a translocation-competent state. It also specifically binds to its receptor SecA. This chain is Protein-export protein SecB, found in Burkholderia cenocepacia (strain ATCC BAA-245 / DSM 16553 / LMG 16656 / NCTC 13227 / J2315 / CF5610) (Burkholderia cepacia (strain J2315)).